We begin with the raw amino-acid sequence, 423 residues long: Serpin B12 (423 aa).

The segment covering 63 to 72 has biased composition (basic and acidic residues); it reads LSKDEHKEPN. A disordered region spans residues 63–106; sequence LSKDEHKEPNDPSPQSESKASDSSLEGQKQTSASQDQQGESTND. Positions 75-106 are enriched in polar residues; it reads SPQSESKASDSSLEGQKQTSASQDQQGESTND.

It belongs to the serpin family. Ov-serpin subfamily. In terms of assembly, interacts with SLFN12; as part of a pathway regulating cell differentiation.

It localises to the cytoplasm. In terms of biological role, inhibits trypsin and plasmin, but not thrombin, coagulation factor Xa, or urokinase-type plasminogen activator. May play a role in cell differentiation. The sequence is that of Serpin B12 (Serpinb12) from Mus musculus (Mouse).